The sequence spans 476 residues: Stromelysin-2 (476 aa).

The N-terminal stretch at 1–17 (MMHLAFLVLLCLPVCSA) is a signal peptide. Positions 18-98 (YPLSGAAKEE…PRCGVPDVGH (81 aa)) are cleaved as a propeptide — activation peptide. The short motif at 89 to 96 (PRCGVPDV) is the Cysteine switch element. Zn(2+) is bound by residues cysteine 91, histidine 167, aspartate 169, histidine 182, histidine 195, and histidine 217. Residue glutamate 218 is part of the active site. Histidine 221 and histidine 227 together coordinate Zn(2+). Hemopexin repeat units lie at residues 286 to 335 (PAKC…WPSL), 336 to 382 (PSYL…GFPP), 384 to 432 (IRKI…FPGV), and 433 to 476 (EPKV…WLHC). Cysteine 289 and cysteine 476 are oxidised to a cystine.

The protein belongs to the peptidase M10A family. Zn(2+) is required as a cofactor. Ca(2+) serves as cofactor.

It localises to the secreted. It is found in the extracellular space. Its subcellular location is the extracellular matrix. It catalyses the reaction Similar to stromelysin 1, but action on collagen types III, IV and V is weak.. Can degrade fibronectin, gelatins of type I, III, IV, and V; weakly collagens III, IV, and V. Activates procollagenase. This Homo sapiens (Human) protein is Stromelysin-2 (MMP10).